The sequence spans 317 residues: tRNA pseudouridine synthase B (317 aa).

D47 serves as the catalytic Nucleophile.

Belongs to the pseudouridine synthase TruB family. Type 1 subfamily.

It carries out the reaction uridine(55) in tRNA = pseudouridine(55) in tRNA. Its function is as follows. Responsible for synthesis of pseudouridine from uracil-55 in the psi GC loop of transfer RNAs. The sequence is that of tRNA pseudouridine synthase B from Shewanella sp. (strain MR-4).